The chain runs to 293 residues: Deubiquitinase OTUD6B (293 aa).

Disordered stretches follow at residues 1 to 43 (MEEV…RRKQ) and 57 to 114 (QKHE…LEKE). The 138-residue stretch at 147 to 284 (LQIKEISSDG…GEHYNSVEPL (138 aa)) folds into the OTU domain. The interval 152–158 (ISSDGHC) is cys-loop. Asp155 is a catalytic residue. Cys158 (nucleophile) is an active-site residue. Residues 219-229 (VADTAAWGGQL) are variable-loop. Residues 267–277 (YMRHAYGLGEH) are his-loop. His277 is a catalytic residue.

It carries out the reaction Thiol-dependent hydrolysis of ester, thioester, amide, peptide and isopeptide bonds formed by the C-terminal Gly of ubiquitin (a 76-residue protein attached to proteins as an intracellular targeting signal).. Deubiquitinating enzyme that may play a role in the ubiquitin-dependent regulation of different cellular processes. The protein is Deubiquitinase OTUD6B (otud6b) of Danio rerio (Zebrafish).